A 336-amino-acid chain; its full sequence is MAVIYYDKDANLDLIKDKKIAIIGFGSQGHAHALNLKDSGLNVIVGLREGSKSWKKAEEQGLTVKTIEEAAKEADIIMILIPDEHQPEVYKKYIEKHLTEGKMLMFAHGFNVHYHQIIPPKNVDVTMIAPKSPGHIVRREYVEGRGVPALVAVYQDYTGKAKEIALAYAKGIGVTRAGVIETTFKEETETDLFGEQAVLCGGVTALIKAGFETLVEAGYQPEIAYFECLNELKLIVDLIYEGGLSFMRYSVSNTAEYGDYISQEKIVTREVRENMKQMLKDIQTGKFAKDWILENQAGRPFFYTMRKKESEHLIEKVGKELRKMMPWLKERNVDEE.

One can recognise a KARI N-terminal Rossmann domain in the interval 1 to 182; sequence MAVIYYDKDA…GVTRAGVIET (182 aa). NADP(+) contacts are provided by residues 25 to 28, Arg48, Ser51, Ser53, and 83 to 86; these read FGSQ and DEHQ. His108 is an active-site residue. Residue Gly134 participates in NADP(+) binding. One can recognise a KARI C-terminal knotted domain in the interval 183–328; the sequence is TFKEETETDL…KELRKMMPWL (146 aa). 4 residues coordinate Mg(2+): Asp191, Glu195, Glu227, and Glu231. Residue Ser252 coordinates substrate.

The protein belongs to the ketol-acid reductoisomerase family. The cofactor is Mg(2+).

The catalysed reaction is (2R)-2,3-dihydroxy-3-methylbutanoate + NADP(+) = (2S)-2-acetolactate + NADPH + H(+). The enzyme catalyses (2R,3R)-2,3-dihydroxy-3-methylpentanoate + NADP(+) = (S)-2-ethyl-2-hydroxy-3-oxobutanoate + NADPH + H(+). It functions in the pathway amino-acid biosynthesis; L-isoleucine biosynthesis; L-isoleucine from 2-oxobutanoate: step 2/4. The protein operates within amino-acid biosynthesis; L-valine biosynthesis; L-valine from pyruvate: step 2/4. In terms of biological role, involved in the biosynthesis of branched-chain amino acids (BCAA). Catalyzes an alkyl-migration followed by a ketol-acid reduction of (S)-2-acetolactate (S2AL) to yield (R)-2,3-dihydroxy-isovalerate. In the isomerase reaction, S2AL is rearranged via a Mg-dependent methyl migration to produce 3-hydroxy-3-methyl-2-ketobutyrate (HMKB). In the reductase reaction, this 2-ketoacid undergoes a metal-dependent reduction by NADPH to yield (R)-2,3-dihydroxy-isovalerate. The protein is Ketol-acid reductoisomerase (NADP(+)) of Thermotoga neapolitana (strain ATCC 49049 / DSM 4359 / NBRC 107923 / NS-E).